The sequence spans 140 residues: MAQSSNSTHEPLEVLKEETVNRHRAIVSVMEELEAVDWYDQRVDASTDPELTAILAHNRDEEKEHAAMTLEWLRRNDAKWAEHLRTYLFTEGPITAIEAADTAGEGSGGDAAKGATAQGDGSLGIGSLKGEAALARPPRL.

Glu31 serves as a coordination point for Ca(2+). Glu32 contributes to the Fe cation binding site. Glu34 serves as a coordination point for Ca(2+). 2 residues coordinate Fe cation: Glu62 and His65. Residues 100–140 (ADTAGEGSGGDAAKGATAQGDGSLGIGSLKGEAALARPPRL) form a disordered region. The targeting peptide stretch occupies residues 100 to 140 (ADTAGEGSGGDAAKGATAQGDGSLGIGSLKGEAALARPPRL).

Belongs to the ferritin-like superfamily. EncFtn family. In terms of assembly, monomers form antiparallel dimers which assemble in a decameric ring 7 nm in diameter and 4.5 nm thick with a central channel (construct without targeting peptide). Growth in Fe(2+)-rich medium induces oligomerization, the monomer does not bind metals. The target peptide probably extends away from the ring, to allow binding to the interior of the encapsulin nanocompartment shell. Requires Fe(2+) as cofactor. Ca(2+) is required as a cofactor.

The protein localises to the encapsulin nanocompartment. It carries out the reaction 4 Fe(2+) + O2 + 4 H(+) = 4 Fe(3+) + 2 H2O. Ferroxidase activity inhibited by Zn(2+). Mutants at Glu-31, Glu-34 and Trp-38 are also inhibited by Zn(2+). Functionally, cargo protein of a type 1 encapsulin nanocompartment. A ferritin-like ferroxidase that mineralizes iron inside the encapsulin nanocompartment. Converts Fe(2+) to Fe(3+) that is released to the exterior of the decameric complex for deposition in the encapsulin nanocompartment. In solution the decamer binds 10-15 iron cations; in the encapsulin nanocompartment the decamer can bind up to 48 ions, perhaps via its internal channel and on its exterior. The empty encapsulin nanocompartment sequesters about 2200 Fe ions while the cargo-loaded nanocompartment can maximally sequester about 4150 Fe ions. EncFtn retains ferroxidase activity when encapsulated. Flux in the active site di-iron metal center is thought to be controlled by the 'entry site' of the protein, which both attracts metal and controls the rate of iron oxidation. Encapsulation in the nanocompartment does not alter either function of this protein. The polypeptide is Encapsulated ferritin-like protein (Rhodospirillum rubrum (strain ATCC 11170 / ATH 1.1.1 / DSM 467 / LMG 4362 / NCIMB 8255 / S1)).